The primary structure comprises 362 residues: Peptide chain release factor 1 (362 aa).

At Q236 the chain carries N5-methylglutamine.

It belongs to the prokaryotic/mitochondrial release factor family. In terms of processing, methylated by PrmC. Methylation increases the termination efficiency of RF1.

It is found in the cytoplasm. Its function is as follows. Peptide chain release factor 1 directs the termination of translation in response to the peptide chain termination codons UAG and UAA. The sequence is that of Peptide chain release factor 1 from Lactobacillus johnsonii (strain CNCM I-12250 / La1 / NCC 533).